The primary structure comprises 336 residues: Meiotically up-regulated gene 33 protein (336 aa).

Residues 232-336 (ISEDDGLKRG…KPSRFSWGRS (105 aa)) form a disordered region. Positions 250 to 262 (TFSNDSRSLSSYA) are enriched in polar residues.

The protein localises to the cytoplasm. Has a role in meiosis. The protein is Meiotically up-regulated gene 33 protein (mug33) of Schizosaccharomyces pombe (strain 972 / ATCC 24843) (Fission yeast).